The sequence spans 196 residues: Histone H1.0-B (196 aa).

Disordered regions lie at residues 1–29 and 86–196; these read MAEN…PKYS and GVGA…GRKK. One can recognise an H15 domain in the interval 24-97; sequence DHPKYSDMIL…GASGSFRLAK (74 aa). Positions 104 to 196 are enriched in basic residues; it reads PAKKPKKEIK…ASPKKSGRKK (93 aa).

It belongs to the histone H1/H5 family.

It localises to the nucleus. It is found in the chromosome. Histones H1 are necessary for the condensation of nucleosome chains into higher-order structures. The histones H1.0 are found in cells that are in terminal stages of differentiation or that have low rates of cell division. The chain is Histone H1.0-B (h1-0-b) from Xenopus laevis (African clawed frog).